We begin with the raw amino-acid sequence, 157 residues long: Cell cycle control protein 50C (157 aa).

Residues Met-1–Arg-34 lie on the Cytoplasmic side of the membrane. Residues Val-35 to Leu-55 form a helical membrane-spanning segment. The Extracellular segment spans residues Ser-56–Val-157. Residue Asn-66 is glycosylated (N-linked (GlcNAc...) asparagine).

Belongs to the CDC50/LEM3 family.

The protein localises to the membrane. This chain is Cell cycle control protein 50C (TMEM30C), found in Pan troglodytes (Chimpanzee).